The chain runs to 491 residues: MATQWEVVIGLETHAQLSTVSKIFSGAATQFGAAPNTQACPVDLALPGVLPVMNKGAVERAIQFGLAIDATIAPRSIFARKNYFYPDLPKGYQISQYEIPVVQGGQITIQVPANEKAGKEAYEKTINLTRAHLEEDAGKSLHEDFAGMTGIDLNRAGTPLLEIVTEPEMRSAAEAVAYAKALHGLVVWLGICDGNMQEGSFRCDANVSVRPVGQKEFGTRAEIKNLNSFRFLEEAIQYEVRRQIELIEDGGTVVQETRLYDPDKRETRSMRSKEDAHDYRYFPDPDLMPLVIDASWVERVKGELPELPAAMQKRFVDQYGLTPYDAGVVTAGKAMAAYYEAVVAKVGAAQAKVAANWLMGEVSSQLNREGLDIADSPVSAAQLALVLQRIADGTISNKIAKEIFLAIWEEKATDEAAADRIIEAKGLKQISDTGALEAIIDEVLAANQKSVEEFRAGKEKAFNALIGQAMKATKGKANPQQVNELLKKKLG.

Belongs to the GatB/GatE family. GatB subfamily. In terms of assembly, heterotrimer of A, B and C subunits.

The catalysed reaction is L-glutamyl-tRNA(Gln) + L-glutamine + ATP + H2O = L-glutaminyl-tRNA(Gln) + L-glutamate + ADP + phosphate + H(+). It catalyses the reaction L-aspartyl-tRNA(Asn) + L-glutamine + ATP + H2O = L-asparaginyl-tRNA(Asn) + L-glutamate + ADP + phosphate + 2 H(+). Allows the formation of correctly charged Asn-tRNA(Asn) or Gln-tRNA(Gln) through the transamidation of misacylated Asp-tRNA(Asn) or Glu-tRNA(Gln) in organisms which lack either or both of asparaginyl-tRNA or glutaminyl-tRNA synthetases. The reaction takes place in the presence of glutamine and ATP through an activated phospho-Asp-tRNA(Asn) or phospho-Glu-tRNA(Gln). In Paraburkholderia phymatum (strain DSM 17167 / CIP 108236 / LMG 21445 / STM815) (Burkholderia phymatum), this protein is Aspartyl/glutamyl-tRNA(Asn/Gln) amidotransferase subunit B.